The primary structure comprises 211 residues: Pyruvate dehydrogenase E1 component subunit beta, mitochondrial (211 aa).

Tyrosine 31 carries the phosphotyrosine modification. The K(+) site is built by isoleucine 48, alanine 96, isoleucine 97, aspartate 99, and asparagine 101.

In terms of assembly, heterotetramer of two PDHA1 and two PDHB subunits. The heterotetramer interacts with DLAT, and is part of the multimeric pyruvate dehydrogenase complex that contains multiple copies of pyruvate dehydrogenase (E1), dihydrolipoamide acetyltransferase (DLAT, E2) and lipoamide dehydrogenase (DLD, E3). These subunits are bound to an inner core composed of about 48 DLAT and 12 PDHX molecules. Interacts with DLAT. It depends on thiamine diphosphate as a cofactor.

Its subcellular location is the mitochondrion matrix. The enzyme catalyses N(6)-[(R)-lipoyl]-L-lysyl-[protein] + pyruvate + H(+) = N(6)-[(R)-S(8)-acetyldihydrolipoyl]-L-lysyl-[protein] + CO2. Its function is as follows. The pyruvate dehydrogenase complex catalyzes the overall conversion of pyruvate to acetyl-CoA and CO(2), and thereby links the glycolytic pathway to the tricarboxylic cycle. The polypeptide is Pyruvate dehydrogenase E1 component subunit beta, mitochondrial (Mesocricetus auratus (Golden hamster)).